We begin with the raw amino-acid sequence, 230 residues long: Flavin-dependent thymidylate synthase (230 aa).

In terms of domain architecture, ThyX spans 1–217 (MEIKVLEKGF…PVTYEAFLNF (217 aa)). FAD is bound by residues Ser55, 78-80 (RHR), and Glu86. DUMP is bound by residues 75–78 (QLVR), 86–90 (ERSGR), and Arg156. The short motif at 78-88 (RHRIASINERS) is the ThyX motif element. FAD-binding positions include 172–174 (NAR) and Asn178. Arg183 contacts dUMP. The Involved in ionization of N3 of dUMP, leading to its activation role is filled by Arg183.

This sequence belongs to the thymidylate synthase ThyX family. In terms of assembly, homotetramer. The cofactor is FAD.

The catalysed reaction is dUMP + (6R)-5,10-methylene-5,6,7,8-tetrahydrofolate + NADPH + H(+) = dTMP + (6S)-5,6,7,8-tetrahydrofolate + NADP(+). Its pathway is pyrimidine metabolism; dTTP biosynthesis. Its function is as follows. Catalyzes the reductive methylation of 2'-deoxyuridine-5'-monophosphate (dUMP) to 2'-deoxythymidine-5'-monophosphate (dTMP) while utilizing 5,10-methylenetetrahydrofolate (mTHF) as the methyl donor, and NADPH and FADH(2) as the reductant. This Kosmotoga olearia (strain ATCC BAA-1733 / DSM 21960 / TBF 19.5.1) protein is Flavin-dependent thymidylate synthase.